A 220-amino-acid polypeptide reads, in one-letter code: PRA1 family protein B4 (220 aa).

Positions 1–27 (MASSAPPVLPISNPQTVPSAAPSSVES) are disordered. The segment covering 12-27 (SNPQTVPSAAPSSVES) has biased composition (polar residues). 5 helical membrane-spanning segments follow: residues 83-103 (YSYF…FSLV), 105-125 (HPFS…LYLF), 146-166 (GCLI…SVLV), 170-190 (MIGV…DLFL), and 196-216 (AATG…PAVI).

It belongs to the PRA1 family. Interacts with PRA1B1, PRA1B2, PRA1B3, PRA1B5, PRA1B6 and PRA1E. Expressed in roots, lateral roots, lateral root caps, stomata and trichomes.

It is found in the endosome membrane. May be involved in both secretory and endocytic intracellular trafficking in the endosomal/prevacuolar compartments. The sequence is that of PRA1 family protein B4 (PRA1B4) from Arabidopsis thaliana (Mouse-ear cress).